Consider the following 520-residue polypeptide: MAYFNQHQSMISKRYLTFFSKSKKKKPFSTGQLIGLILGPLLFLLTLLFFHPQDLPWKGVYVLAITLWIATWWITEAIPIAATSLLPIVLLPLGHILTPEQVSSEYGNDIIFLFLGGFILAIAMERWNLHTRVALTIINLIGASTSKILLGFMVATGFLSMFVSNTAAVMIMIPIGLAIIKEAHDLQEANTNQTSIQKFEKSLVLAIGYAGTIGGLGTLIGTPPLIILKGQYMQHFGHEISFAKWMIVGIPTVIVLLGITWLYLRYVAFRHDLKYLPGGQTLIKQKLDELGKMKYEEKVVQTIFVLASLLWITREFLLKKWEVTSSVADGTIAIFISILLFIIPAKNTEKHRRIIDWEVAKELPWGVLILFGGGLALAKGISESGLAKWLGEQLKSLNGVSPILIVIVITIFVLFLTEVTSNTATATMILPILATLSVAVGVHPLLLMAPAAMAANCAYMLPVGTPPNAIIFGSGKISIKQMASVGFWVNLISAIIIILVVYYIMPIVLGIDINQPLPLK.

14 consecutive transmembrane segments (helical) span residues 30 to 50 (TGQLIGLILGPLLFLLTLLFF), 55 to 75 (LPWKGVYVLAITLWIATWWIT), 77 to 97 (AIPIAATSLLPIVLLPLGHIL), 104 to 124 (SEYGNDIIFLFLGGFILAIAM), 160 to 180 (SMFVSNTAAVMIMIPIGLAII), 207 to 227 (IGYAGTIGGLGTLIGTPPLII), 242 to 262 (FAKWMIVGIPTVIVLLGITWL), 298 to 318 (KVVQTIFVLASLLWITREFLL), 323 to 343 (VTSSVADGTIAIFISILLFII), 362 to 382 (ELPWGVLILFGGGLALAKGIS), 399 to 419 (GVSPILIVIVITIFVLFLTEV), 428 to 448 (MILPILATLSVAVGVHPLLLM), 452 to 472 (AMAANCAYMLPVGTPPNAIIF), and 491 to 511 (LISAIIIILVVYYIMPIVLGI).

This sequence belongs to the SLC13A/DASS transporter (TC 2.A.47) family. NADC subfamily.

Its subcellular location is the cell membrane. Functionally, mediates the transport of the dicarboxylates fumarate, malate, and succinate across the cytoplasmic membrane via a Na(+)-electrochemical gradient. This is Sodium-dependent dicarboxylate transporter SdcS (sdcS) from Staphylococcus aureus (strain MRSA252).